Consider the following 461-residue polypeptide: Zinc transporter 6 (461 aa).

The Cytoplasmic portion of the chain corresponds to Met1–Lys33. Residues Ile34–Ser54 form a helical membrane-spanning segment. The Extracellular portion of the chain corresponds to Thr55 to Thr64. Residues Tyr65 to Met85 form a helical membrane-spanning segment. Residues Arg86 to Arg98 are Cytoplasmic-facing. Residues Leu99–Leu119 form a helical membrane-spanning segment. At Lys120–Thr134 the chain is on the extracellular side. The chain crosses the membrane as a helical span at residues Gly135–Ile155. Over Arg156–Pro200 the chain is Cytoplasmic. The chain crosses the membrane as a helical span at residues Phe201–Ile221. Over Asn222–Asn223 the chain is Extracellular. A helical membrane pass occupies residues Tyr224–Tyr244. Topologically, residues Pro245–Pro461 are cytoplasmic. The segment at Pro362 to Gly393 is disordered. Low complexity predominate over residues Ser370–Lys379.

It belongs to the cation diffusion facilitator (CDF) transporter (TC 2.A.4) family. SLC30A subfamily. In terms of assembly, heterodimer with SLC30A5; form a functional zinc ion transmembrane transporter.

The protein resides in the golgi apparatus. It is found in the trans-Golgi network membrane. In terms of biological role, has probably no intrinsic transporter activity but together with SLC30A5 forms a functional zinc ion:proton antiporter heterodimer, mediating zinc entry into the lumen of organelles along the secretory pathway. As part of that zinc ion:proton antiporter, contributes to zinc ion homeostasis within the early secretory pathway and regulates the activation and folding of enzymes like alkaline phosphatases and enzymes involved in phosphatidylinositol glycan anchor biosynthesis. This is Zinc transporter 6 (SLC30A6) from Bos taurus (Bovine).